We begin with the raw amino-acid sequence, 751 residues long: Protein CLMP1 (751 aa).

Positions 1 to 11 are enriched in basic residues; sequence MGKSGGRKKKS. Positions 1–33 are disordered; the sequence is MGKSGGRKKKSGGSNSNSSQVNSSETSGLSKPS. Residues 12–28 show a composition bias toward low complexity; that stretch reads GGSNSNSSQVNSSETSG. 3 TPR repeats span residues 51 to 84, 89 to 124, and 125 to 158; these read AHEL…IPKS, AVFH…QPGF, and TRAL…DPNH. Positions 290–382 constitute a PB1 domain; the sequence is WRPLKFVYDH…GMLRLHVVDV (93 aa). The interval 386-443 is disordered; the sequence is QEPMLLEEEEEEVEEKPVIEEVISSPTESLSETEINTEKTDKEVEKEKASSSEDPETK. Residues 390–399 show a composition bias toward acidic residues; that stretch reads LLEEEEEEVE. A compositionally biased stretch (polar residues) spans 409 to 419; that stretch reads SSPTESLSETE. Basic and acidic residues predominate over residues 421 to 443; that stretch reads NTEKTDKEVEKEKASSSEDPETK. 3 TPR repeats span residues 434–468, 481–514, and 536–570; these read ASSS…DPDA, SEAL…AFFN, and EVVA…KPDF. Residues 630–648 show a composition bias toward basic and acidic residues; it reads EQRMDDLKNPNSNKKEEVS. The segment at 630-663 is disordered; it reads EQRMDDLKNPNSNKKEEVSKRRKKQGGDGNEEVS.

As to quaternary structure, interacts with myosin XI-K. In terms of tissue distribution, expressed in roots, stems, leaves, apex, flowers and seeds. Detected throughout the petiole in juvenile and young leaves, but restricted to the petiole midvein in older leaves. Expressed in hydathodes, at the base of the trichome, in the vascular cylinder of primary root and lateral root, in emerging lateral root primordia, in pollen and in developing embryos, but not in mature embryos.

It is found in the cytoplasm. Required for plastid separation and partitioning during cell division. Not involved in plastid constriction or in the organization of cytoplasmic actin cables. Contributes to polar growth of root hairs. This is Protein CLMP1 from Arabidopsis thaliana (Mouse-ear cress).